The chain runs to 145 residues: RNA polymerase I-specific transcription initiation factor RRN10 (145 aa).

In terms of assembly, component of the UAF (upstream activation factor) complex which consists of UAF30, RRN5, RRN9, RRN10, and histones H3 and H4.

It localises to the nucleus. It is found in the nucleolus. Functionally, component of the UAF (upstream activation factor) complex which interacts with the upstream element of the RNA polymerase I promoter and forms a stable preinitiation complex. Together with SPT15/TBP UAF seems to stimulate basal transcription to a fully activated level. This chain is RNA polymerase I-specific transcription initiation factor RRN10 (RRN10), found in Saccharomyces cerevisiae (strain ATCC 204508 / S288c) (Baker's yeast).